The sequence spans 427 residues: Septin-8-A (427 aa).

Positions 39 to 305 constitute a Septin-type G domain; sequence QGFCFNILCV…ELYRRCKLEE (267 aa). The tract at residues 49 to 56 is G1 motif; sequence GETGIGKS. GTP contacts are provided by residues 49–56, Gly104, 185–193, Gly239, and Arg254; these read GETGIGKS and KADTISKSE. Positions 101–104 are G3 motif; that stretch reads DTVG. A G4 motif region spans residues 184 to 187; sequence AKAD. Residues 320–409 are a coiled coil; that stretch reads LQETYEAKRK…KAAMEALQSQ (90 aa). A compositionally biased stretch (basic and acidic residues) spans 376 to 389; that stretch reads QEESKKVEDKRRDL. The tract at residues 376-427 is disordered; sequence QEESKKVEDKRRDLEEEMNSFNRRKAAMEALQSQSFQATSQQPLKKDKDRKN. Positions 406 to 418 are enriched in polar residues; sequence LQSQSFQATSQQP.

The protein belongs to the TRAFAC class TrmE-Era-EngA-EngB-Septin-like GTPase superfamily. Septin GTPase family.

The polypeptide is Septin-8-A (sept8-a) (Xenopus laevis (African clawed frog)).